Reading from the N-terminus, the 113-residue chain is Large ribosomal subunit protein uL22 (113 aa).

This sequence belongs to the universal ribosomal protein uL22 family. As to quaternary structure, part of the 50S ribosomal subunit.

Its function is as follows. This protein binds specifically to 23S rRNA; its binding is stimulated by other ribosomal proteins, e.g. L4, L17, and L20. It is important during the early stages of 50S assembly. It makes multiple contacts with different domains of the 23S rRNA in the assembled 50S subunit and ribosome. Functionally, the globular domain of the protein is located near the polypeptide exit tunnel on the outside of the subunit, while an extended beta-hairpin is found that lines the wall of the exit tunnel in the center of the 70S ribosome. The protein is Large ribosomal subunit protein uL22 of Halalkalibacterium halodurans (strain ATCC BAA-125 / DSM 18197 / FERM 7344 / JCM 9153 / C-125) (Bacillus halodurans).